The following is a 413-amino-acid chain: Eukaryotic initiation factor 4A-9 (413 aa).

Residues 40 to 68 (HSFDAMGLKENLLRGIYAYGFEKPSAIQQ) carry the Q motif motif. One can recognise a Helicase ATP-binding domain in the interval 71-241 (IVPFCKGLDV…RKFMNKPVRI (171 aa)). 84–91 (AQSGTGKT) contributes to the ATP binding site. The DEAD box motif lies at 189–192 (DEAD). The Helicase C-terminal domain occupies 252–413 (GIKQFYVNVD…ELPANVADLL (162 aa)).

Belongs to the DEAD box helicase family. eIF4A subfamily. As to quaternary structure, eIF4F is a multi-subunit complex, the composition of which varies with external and internal environmental conditions. It is composed of at least EIF4A, EIF4E and EIF4G.

It carries out the reaction ATP + H2O = ADP + phosphate + H(+). Its function is as follows. ATP-dependent RNA helicase which is a subunit of the eIF4F complex involved in cap recognition and is required for mRNA binding to ribosome. In the current model of translation initiation, eIF4A unwinds RNA secondary structures in the 5'-UTR of mRNAs which is necessary to allow efficient binding of the small ribosomal subunit, and subsequent scanning for the initiator codon. The sequence is that of Eukaryotic initiation factor 4A-9 from Nicotiana tabacum (Common tobacco).